The primary structure comprises 189 residues: Elongation factor P (189 aa).

The protein belongs to the elongation factor P family.

The protein resides in the cytoplasm. It participates in protein biosynthesis; polypeptide chain elongation. Involved in peptide bond synthesis. Stimulates efficient translation and peptide-bond synthesis on native or reconstituted 70S ribosomes in vitro. Probably functions indirectly by altering the affinity of the ribosome for aminoacyl-tRNA, thus increasing their reactivity as acceptors for peptidyl transferase. The polypeptide is Elongation factor P (Pseudomonas savastanoi pv. phaseolicola (strain 1448A / Race 6) (Pseudomonas syringae pv. phaseolicola (strain 1448A / Race 6))).